The chain runs to 161 residues: uncharacterized protein (161 aa).

Residues 1 to 16 (MPRAGRAPAEGGPAPG) are compositionally biased toward low complexity. 3 disordered regions span residues 1–23 (MPRAGRAPAEGGPAPGTRSSRCL), 50–91 (GRPV…TQSA), and 140–161 (RGPACGSTAQWPPRGDPTWRIS).

This is an uncharacterized protein from Homo sapiens (Human).